The sequence spans 723 residues: Threonine--tRNA ligase 1, cytoplasmic (723 aa).

Residues 1 to 46 form a disordered region; sequence MFEEKASSPSGKMGGEEKPIGAGEEKQKEGGKKKNKEGSGDGGRAE. Positions 14 to 39 are enriched in basic and acidic residues; sequence GGEEKPIGAGEEKQKEGGKKKNKEGS. Position 39 is a phosphoserine (Ser-39). A TGS domain is found at 79–143; the sequence is DSKPIKVTLP…EEDCTLELLK (65 aa). Lys-243 carries the N6-acetyllysine modification. At Thr-246 the chain carries Phosphothreonine. Tyr-298 is modified (phosphotyrosine). Thr-453 is subject to Phosphothreonine. Residue Ser-702 is modified to Phosphoserine.

Belongs to the class-II aminoacyl-tRNA synthetase family. In terms of assembly, homodimer. Post-translationally, ISGylated.

The protein resides in the cytoplasm. The enzyme catalyses tRNA(Thr) + L-threonine + ATP = L-threonyl-tRNA(Thr) + AMP + diphosphate + H(+). With respect to regulation, inhibited by borrelidin (BN, IC 50 is 7 nM), which binds to 4 distinct subsites in the protein, preventing binding of all 3 substrates. Catalyzes the attachment of threonine to tRNA(Thr) in a two-step reaction: threonine is first activated by ATP to form Thr-AMP and then transferred to the acceptor end of tRNA(Thr). Also edits incorrectly charged tRNA(Thr) via its editing domain, at the post-transfer stage. The sequence is that of Threonine--tRNA ligase 1, cytoplasmic from Homo sapiens (Human).